A 335-amino-acid polypeptide reads, in one-letter code: Fructose-1,6-bisphosphatase class 1 (335 aa).

Mg(2+)-binding residues include Glu92, Asp115, Leu117, and Asp118. Residues 118–121, Asn211, Tyr244, 262–264, and Lys274 contribute to the substrate site; these read DGSS and YLY. Glu280 contacts Mg(2+).

The protein belongs to the FBPase class 1 family. As to quaternary structure, homotetramer. Mg(2+) serves as cofactor.

It is found in the cytoplasm. The catalysed reaction is beta-D-fructose 1,6-bisphosphate + H2O = beta-D-fructose 6-phosphate + phosphate. It functions in the pathway carbohydrate biosynthesis; gluconeogenesis. This Teredinibacter turnerae (strain ATCC 39867 / T7901) protein is Fructose-1,6-bisphosphatase class 1.